Consider the following 298-residue polypeptide: Ribosomal RNA small subunit methyltransferase H (298 aa).

S-adenosyl-L-methionine-binding positions include 35–37 (GGH), Asp55, Phe82, Asp100, and Gln107.

It belongs to the methyltransferase superfamily. RsmH family.

The protein resides in the cytoplasm. The enzyme catalyses cytidine(1402) in 16S rRNA + S-adenosyl-L-methionine = N(4)-methylcytidine(1402) in 16S rRNA + S-adenosyl-L-homocysteine + H(+). Functionally, specifically methylates the N4 position of cytidine in position 1402 (C1402) of 16S rRNA. This is Ribosomal RNA small subunit methyltransferase H from Chlamydia felis (strain Fe/C-56) (Chlamydophila felis).